The following is a 467-amino-acid chain: Coiled-coil domain-containing protein 174 (467 aa).

Disordered regions lie at residues 47 to 76 (INKKPSIWSKQNAGVTSRAEKDAEQKLEEQ) and 129 to 163 (GATRESQIEEERDDDDKEEFSDKDIPPPQDPSEEW). The span at 64–76 (RAEKDAEQKLEEQ) shows a compositional bias: basic and acidic residues. A coiled-coil region spans residues 64–99 (RAEKDAEQKLEEQKTLDKAREKLEEKAKLYEKMTKG). Residues 136–147 (IEEERDDDDKEE) are compositionally biased toward acidic residues. Position 198 is a phosphoserine (Ser-198). Positions 268 to 310 (LEMLREQTTDQRIKRENIKEKRKAMLEARLAKLRQKKMKKSKE) form a coiled coil. Disordered regions lie at residues 301-365 (RQKK…IREW) and 379-454 (KQSE…VTFQ). 2 stretches are compositionally biased toward basic and acidic residues: residues 349–365 (IQERRDTKPGVPHIREW) and 379–390 (KQSELRAERDPE). Residues 406-415 (PMSSQPQSRP) show a composition bias toward polar residues. Residues 423–446 (GHSSGQSQEPSSSHTSTPASESSP) are compositionally biased toward low complexity.

It localises to the nucleus. In terms of biological role, probably involved in neuronal development. The chain is Coiled-coil domain-containing protein 174 (Ccdc174) from Mus musculus (Mouse).